We begin with the raw amino-acid sequence, 111 residues long: Probable 4-amino-4-deoxy-L-arabinose-phosphoundecaprenol flippase subunit ArnE (111 aa).

Residues 1–37 lie on the Cytoplasmic side of the membrane; the sequence is MIWLVLILASLLSVTGQLCQKQATRPVAINKRRKHIA. A helical transmembrane segment spans residues 38–58; it reads LWLGLGLVCLGLAMVLWLLVL. In terms of domain architecture, EamA spans 40–109; sequence LGLGLVCLGL…IIGGIVILGS (70 aa). Residues 59–60 are Periplasmic-facing; it reads QT. A helical transmembrane segment spans residues 61–81; the sequence is VPVGIAYPMLSLNFVWVTLAA. The Cytoplasmic portion of the chain corresponds to 82–87; it reads TKLWHE. The helical transmembrane segment at 88–108 threads the bilayer; it reads PVSFRHWCGVAFIIGGIVILG. The Periplasmic segment spans residues 109–111; sequence STV.

This sequence belongs to the ArnE family. In terms of assembly, heterodimer of ArnE and ArnF.

Its subcellular location is the cell inner membrane. The protein operates within bacterial outer membrane biogenesis; lipopolysaccharide biosynthesis. Translocates 4-amino-4-deoxy-L-arabinose-phosphoundecaprenol (alpha-L-Ara4N-phosphoundecaprenol) from the cytoplasmic to the periplasmic side of the inner membrane. This chain is Probable 4-amino-4-deoxy-L-arabinose-phosphoundecaprenol flippase subunit ArnE, found in Escherichia fergusonii (strain ATCC 35469 / DSM 13698 / CCUG 18766 / IAM 14443 / JCM 21226 / LMG 7866 / NBRC 102419 / NCTC 12128 / CDC 0568-73).